A 303-amino-acid polypeptide reads, in one-letter code: MTYAAEDFDYEGLPIGSPMYAHLLAGAFSGILEHSVMYPVDAIKTRMQMLNGVSRSVSGNIVNSVIKISSTEGVYSLWRGISSVIMGAGPSHAIYFSVLEFFKSKINASPDRPLASALAGACAITISDAFMTPFDVIKQRMQLPSRKYKSALHCATTVFRNEGLGAFYISYPTCIAMSIPFTAIQVATYDTCMSFLNPNAVYDPTSHIISGGLSGAIASSLTTPLDVVKTLLQTRGSSSIPEVRKCKGSLDVVRFIYNYGGIPSFFKGIRPRMVVAMPATAVSWAAYEAGKEILIRVSKTSQA.

The next 6 helical transmembrane spans lie at 12 to 32 (GLPI…SGIL), 81 to 101 (ISSV…VLEF), 117 to 137 (ALAG…FDVI), 174 to 194 (CIAM…TCMS), 208 to 228 (IISG…LDVV), and 265 to 286 (FFKG…SWAA). Solcar repeat units follow at residues 17-105 (SPMY…FKSK), 111-195 (DRPL…CMSF), and 206-293 (SHII…GKEI).

Belongs to the mitochondrial carrier (TC 2.A.29) family.

The protein localises to the mitochondrion inner membrane. This is an uncharacterized protein from Schizosaccharomyces pombe (strain 972 / ATCC 24843) (Fission yeast).